Consider the following 202-residue polypeptide: MKALTTRQQEVFDLIRDHISQTGMPPTRAEIAQRLGFRSPNAAEEHLKALARKGVIEIVSGASRGIRLLQEEENGLPLIGRVAAGEPLLAQQHIEGHYQVDPGLFKPNADFLLRVSGMSMKDIGIMDGDLLAVHKTQDVRNGQVVVARIDDEVTVKRLKKQGNTVELLPENSEFKPIVVDLREHNFSIEGLAVGVIRNGEWL.

A DNA-binding region (H-T-H motif) is located at residues 28–48 (RAEIAQRLGFRSPNAAEEHLK). Catalysis depends on for autocatalytic cleavage activity residues Ser-119 and Lys-156.

This sequence belongs to the peptidase S24 family. In terms of assembly, homodimer.

It catalyses the reaction Hydrolysis of Ala-|-Gly bond in repressor LexA.. Functionally, represses a number of genes involved in the response to DNA damage (SOS response), including recA and lexA. Binds to the 16 bp palindromic sequence 5'-CTGTATATATATACAG-3'. In the presence of single-stranded DNA, RecA interacts with LexA causing an autocatalytic cleavage which disrupts the DNA-binding part of LexA, leading to derepression of the SOS regulon and eventually DNA repair. This chain is LexA repressor, found in Cronobacter sakazakii (strain ATCC BAA-894) (Enterobacter sakazakii).